Consider the following 510-residue polypeptide: GPI mannosyltransferase 3 (510 aa).

7 helical membrane passes run 17–37, 96–116, 123–143, 145–163, 179–199, 221–241, and 269–289; these read TVLV…KTFF, IAPK…TWKL, PAEA…WFFL, RTFS…LNYW, LFIG…WAVL, VALV…EPVF, and YEAL…GLWI. Asparagine 290 carries an N-linked (GlcNAc...) asparagine glycan. Transmembrane regions (helical) follow at residues 316–336 and 342–362; these read FIYP…TQTP and WLVW…SQVH.

It belongs to the glycosyltransferase 22 family. PIGB subfamily.

It localises to the endoplasmic reticulum membrane. It participates in glycolipid biosynthesis; glycosylphosphatidylinositol-anchor biosynthesis. Mannosyltransferase involved in glycosylphosphatidylinositol-anchor biosynthesis. Transfers the third mannose to Man2-GlcN-acyl-PI during GPI precursor assembly. In Yarrowia lipolytica (strain CLIB 122 / E 150) (Yeast), this protein is GPI mannosyltransferase 3 (GPI10).